Consider the following 545-residue polypeptide: Ribulokinase (545 aa).

The protein belongs to the ribulokinase family.

It carries out the reaction D-ribulose + ATP = D-ribulose 5-phosphate + ADP + H(+). It catalyses the reaction L-ribulose + ATP = L-ribulose 5-phosphate + ADP + H(+). The protein operates within carbohydrate degradation; L-arabinose degradation via L-ribulose; D-xylulose 5-phosphate from L-arabinose (bacterial route): step 2/3. The polypeptide is Ribulokinase (Staphylococcus aureus (strain bovine RF122 / ET3-1)).